The primary structure comprises 190 residues: Signal peptidase complex subunit 3 (190 aa).

At 1–9 the chain is on the cytoplasmic side; it reads MFNIVTRFQ. Residues 10 to 32 traverse the membrane as a helical; Signal-anchor for type II membrane protein segment; that stretch reads YAANQALTSSIIIAGIVIVSSLL. Residues 33-190 are Lumenal-facing; the sequence is QLYSNNAWSL…EYVDKKKEQK (158 aa).

Belongs to the SPCS3 family. In terms of assembly, component of the signal peptidase complex (SPC) composed of a catalytic subunit SEC11 and three accessory subunits SPC1, SPC2 and SPC3. The complex induces a local thinning of the ER membrane which is used to measure the length of the signal peptide (SP) h-region of protein substrates. This ensures the selectivity of the complex towards h-regions shorter than 18-20 amino acids. SPC associates with the translocon complex.

It localises to the endoplasmic reticulum membrane. Its function is as follows. Essential component of the signal peptidase complex (SPC) which catalyzes the cleavage of N-terminal signal sequences from nascent proteins as they are translocated into the lumen of the endoplasmic reticulum. Essential for the SPC catalytic activity, possibly by stabilizing and positioning the active center of the complex close to the lumenal surface. Essential for viability. This is Signal peptidase complex subunit 3 (SPC3) from Debaryomyces hansenii (strain ATCC 36239 / CBS 767 / BCRC 21394 / JCM 1990 / NBRC 0083 / IGC 2968) (Yeast).